The sequence spans 382 residues: MGDWSALGKLLDKVQAYSTAGGKVWLSVLFIFRILLLGTAVESAWGDEQSAFRCNTQQPGCENVCYDKSFPISHVRFWVLQIIFVSVPTLLYLAHVFYVMRKEEKLNKKEEELKVAQTDGVNVEMHLKQIEIKKFKYGIEEHGKVKMRGGLLRTYIISILFKSVFEVAFLLIQWYIYGFSLSAVYTCKRDPCPHQVDCFLSRPTEKTIFIIFMLVVSLVSLALNIIELFYVFFKGVKDRVKGKSDPYHATTGPLSPSKDCGSPKYAYFNGCSSPTAPLSPMSPPGYKLVTGDRNNSSCRNYNKQASEQNWANYSAEQNRMGQAGSTISNSHAQPFDFPDDNQNSKKLATGHELQPLAIVDQRPSSRASSRASSRPRPDDLEI.

The Cytoplasmic portion of the chain corresponds to 2-23 (GDWSALGKLLDKVQAYSTAGGK). A Phosphoserine modification is found at serine 5. The helical transmembrane segment at 24–44 (VWLSVLFIFRILLLGTAVESA) threads the bilayer. Residues 45–76 (WGDEQSAFRCNTQQPGCENVCYDKSFPISHVR) lie on the Extracellular side of the membrane. 2 disulfides stabilise this stretch: cysteine 54/cysteine 192 and cysteine 187/cysteine 198. A helical transmembrane segment spans residues 77–97 (FWVLQIIFVSVPTLLYLAHVF). Residues 98–155 (YVMRKEEKLNKKEEELKVAQTDGVNVEMHLKQIEIKKFKYGIEEHGKVKMRGGLLRTY) lie on the Cytoplasmic side of the membrane. Residue lysine 144 forms a Glycyl lysine isopeptide (Lys-Gly) (interchain with G-Cter in SUMO) linkage. A helical membrane pass occupies residues 156-176 (IISILFKSVFEVAFLLIQWYI). Residues 177-207 (YGFSLSAVYTCKRDPCPHQVDCFLSRPTEKT) are Extracellular-facing. A helical transmembrane segment spans residues 208 to 228 (IFIIFMLVVSLVSLALNIIEL). The Cytoplasmic segment spans residues 229 to 382 (FYVFFKGVKD…SRPRPDDLEI (154 aa)). Lysine 237 participates in a covalent cross-link: Glycyl lysine isopeptide (Lys-Gly) (interchain with G-Cter in SUMO). The segment at 244–382 (SDPYHATTGP…SRPRPDDLEI (139 aa)) is interaction with NOV. Tyrosine 247 is subject to Phosphotyrosine. Residues serine 255, serine 257, and serine 262 each carry the phosphoserine modification. Residues 264-382 (KYAYFNGCSS…SRPRPDDLEI (119 aa)) are interaction with UBQLN4. Residue cysteine 271 is modified to S-nitrosocysteine. Threonine 275 bears the Phosphothreonine mark. Residues serine 306 and serine 314 each carry the phosphoserine modification. The span at 317–332 (QNRMGQAGSTISNSHA) shows a compositional bias: polar residues. The tract at residues 317-382 (QNRMGQAGST…SRPRPDDLEI (66 aa)) is disordered. Position 325 is a phosphoserine; by CK1 (serine 325). The residue at position 326 (threonine 326) is a Phosphothreonine. Serine 328 and serine 330 each carry phosphoserine; by CK1. Serine 344 and serine 365 each carry phosphoserine. Residues 362 to 374 (RPSSRASSRASSR) show a composition bias toward low complexity. A Phosphoserine; by PKC/PRKCG and PKC/PRKCD modification is found at serine 368. A phosphoserine mark is found at serine 369 and serine 373.

Belongs to the connexin family. Alpha-type (group II) subfamily. In terms of assembly, a connexon is composed of a hexamer of connexins. Interacts with SGSM3. Interacts with RIC1/CIP150. Interacts with CNST and CSNK1D. Interacts (via C-terminus) with TJP1. Interacts (via C-terminus) with SRC (via SH3 domain). Interacts (not ubiquitinated) with UBQLN4 (via UBA domain). Interacts with NOV. Interacts with TMEM65. Interacts with ANK3/ANKG and PKP2. Phosphorylation at Ser-325, Ser-328 and Ser-330 by CK1 modulates gap junction assembly. Phosphorylated at Ser-368 by PRKCG; phosphorylation induces disassembly of gap junction plaques and inhibition of gap junction activity. Phosphorylation at Ser-368 by PRKCD triggers its internalization into small vesicles leading to proteasome-mediated degradation. In terms of processing, sumoylated with SUMO1, SUMO2 and SUMO3, which may regulate the level of functional Cx43 gap junctions at the plasma membrane. May be desumoylated by SENP1 or SENP2. Post-translationally, S-nitrosylation at Cys-271 is enriched at the muscle endothelial gap junction in arteries, it augments channel permeability and may regulate of smooth muscle cell to endothelial cell communication. Acetylated in the developing cortex; leading to delocalization from the cell membrane.

It is found in the cell membrane. Its subcellular location is the cell junction. It localises to the gap junction. The protein localises to the endoplasmic reticulum. In terms of biological role, gap junction protein that acts as a regulator of bladder capacity. A gap junction consists of a cluster of closely packed pairs of transmembrane channels, the connexons, through which materials of low MW diffuse from one cell to a neighboring cell. May play a critical role in the physiology of hearing by participating in the recycling of potassium to the cochlear endolymph. Negative regulator of bladder functional capacity: acts by enhancing intercellular electrical and chemical transmission, thus sensitizing bladder muscles to cholinergic neural stimuli and causing them to contract. May play a role in cell growth inhibition through the regulation of NOV expression and localization. Plays an essential role in gap junction communication in the ventricles. This is Gap junction alpha-1 protein (GJA1) from Ursus americanus (American black bear).